Reading from the N-terminus, the 243-residue chain is Homeobox protein nob-1 (243 aa).

Residues 1–12 are compositionally biased toward polar residues; it reads MISVMQQMINND. 2 disordered regions span residues 1-23 and 40-67; these read MISV…SITS and SIQG…TGMV. The homeobox DNA-binding region spans 162 to 221; that stretch reads GKKKRQPYKKDQISRLEYEYSVNQYLTNKRRSELSAQLMLDEKQVKVWFQNRRMKDKKLR.

It belongs to the abd-b homeobox family. In terms of assembly, interacts with nuclear receptor nhr-25. Interacts with geminin homolog gmn-1. Interacts with homeodomain protein ceh-20.

The protein resides in the nucleus. In terms of biological role, transcription factor, involved in posterior embryonic patterning, morphogenetic movements of the posterior hypodermis, and cell fate specification. Binds to the 5'-TAGT-3' motif in regulatory elements of genes, including Meis protein psa-3 and microRNA mir-57. Involved in a negative regulatory loop with mir-57 to specify posterior cell identities. Required for asymmetric division of the T hypodermal cell, acting via the regulation of asymmetric expression of psa-3 in cooperation with ceh-20 and the Wnt-MAPK pathway. Involved in the regulation of the onset of non-apoptotic cell death in the linker cell, acting together with the Wnt signaling pathway. Involved in promoting embryogenesis, in concert with orphan nuclear receptor nhr-25. May regulate expression of transcription factor dmd-3. The chain is Homeobox protein nob-1 from Caenorhabditis elegans.